The primary structure comprises 206 residues: Small ribosomal subunit protein uS4 (206 aa).

The tract at residues Asn18–Lys44 is disordered. Positions Arg94–Val157 constitute an S4 RNA-binding domain.

Belongs to the universal ribosomal protein uS4 family. Part of the 30S ribosomal subunit. Contacts protein S5. The interaction surface between S4 and S5 is involved in control of translational fidelity.

Functionally, one of the primary rRNA binding proteins, it binds directly to 16S rRNA where it nucleates assembly of the body of the 30S subunit. With S5 and S12 plays an important role in translational accuracy. This Jannaschia sp. (strain CCS1) protein is Small ribosomal subunit protein uS4.